The primary structure comprises 954 residues: Regulatory protein FlaEY (954 aa).

Functions in trans to modulate the level of transcription of the flagellin genes and several genes encoding chemotaxis functions. It is itself temporally controlled. In Caulobacter vibrioides (strain ATCC 19089 / CIP 103742 / CB 15) (Caulobacter crescentus), this protein is Regulatory protein FlaEY (flaEY).